Reading from the N-terminus, the 402-residue chain is S-adenosylmethionine synthase (402 aa).

H16 provides a ligand contact to ATP. Mg(2+) is bound at residue D18. K(+) is bound at residue E44. Positions 57 and 103 each coordinate L-methionine. The segment at 103-113 (QSPDIAQGVDT) is flexible loop. Residues 178 to 180 (DGK), 249 to 250 (KF), D258, 264 to 265 (RK), A281, and K285 contribute to the ATP site. D258 contributes to the L-methionine binding site. An L-methionine-binding site is contributed by K289.

This sequence belongs to the AdoMet synthase family. As to quaternary structure, homotetramer; dimer of dimers. It depends on Mg(2+) as a cofactor. K(+) is required as a cofactor.

The protein resides in the cytoplasm. It catalyses the reaction L-methionine + ATP + H2O = S-adenosyl-L-methionine + phosphate + diphosphate. Its pathway is amino-acid biosynthesis; S-adenosyl-L-methionine biosynthesis; S-adenosyl-L-methionine from L-methionine: step 1/1. In terms of biological role, catalyzes the formation of S-adenosylmethionine (AdoMet) from methionine and ATP. The overall synthetic reaction is composed of two sequential steps, AdoMet formation and the subsequent tripolyphosphate hydrolysis which occurs prior to release of AdoMet from the enzyme. The polypeptide is S-adenosylmethionine synthase (Mycobacterium sp. (strain JLS)).